The primary structure comprises 1146 residues: Activator of SKN7 protein 10 (1146 aa).

Residues 1-15 (MSDYFSSRPSQTLTP) are compositionally biased toward polar residues. Disordered regions lie at residues 1–32 (MSDY…ASSI) and 171–194 (ITDP…KVGL). Ser-344 is modified (phosphoserine). In terms of domain architecture, PH spans 482–606 (CIKAGYFLKK…DCTLKDASST (125 aa)). Positions 553–575 (NNHHRQASDVHNSSTTTGGTAGA) are disordered. Over residues 564-575 (NSSTTTGGTAGA) the composition is skewed to low complexity. Ser-793 is modified (phosphoserine). Thr-808 bears the Phosphothreonine mark. 2 disordered regions span residues 835–854 (MATS…PQSM) and 909–982 (PVNS…TAMR). Low complexity predominate over residues 912–924 (SPGSSNSESSSGG). Residues 939–950 (YTQRNSEGSSPC) are compositionally biased toward polar residues. At Ser-944 the chain carries Phosphoserine. Over residues 958–968 (QQQQPLQMQPL) the composition is skewed to low complexity. Ser-969 is subject to Phosphoserine. Residues 969 to 982 (SRTSSSSVNVTAMR) show a composition bias toward polar residues. Thr-1017 carries the phosphothreonine modification. A phosphoserine mark is found at Ser-1070, Ser-1095, and Ser-1098. A disordered region spans residues 1124–1146 (GIQEDDGDSTNNDTIKLNQSIYS). Residues 1132–1146 (STNNDTIKLNQSIYS) show a composition bias toward polar residues.

Belongs to the RGC1 family. As to quaternary structure, component of the RNA polymerase II holoenzyme. Interacts with RPO21 and SSN8. Phosphorylated in response to various stresses. stress-induced phosphorylation is partially dependent on HOG1.

It is found in the cytoplasm. Its function is as follows. Positive regulator of FPS1 glycerol channel required for the glycerol efflux. As a component of the RNA polymerase II holoenzyme, is required for SSN8 destruction in response to oxidative stress but not heat shock. Required for cell survival in response to heat shock independent of SSN8. The polypeptide is Activator of SKN7 protein 10 (ASK10) (Saccharomyces cerevisiae (strain ATCC 204508 / S288c) (Baker's yeast)).